A 197-amino-acid chain; its full sequence is Inner membrane protein p54 (197 aa).

Residues Y32–F52 traverse the membrane as a helical segment. Residues P84 to V123 are disordered. A run of 4 repeats spans residues A139–S142, A143–S146, A147–S150, and A151–S154. The interval A139–S154 is 4 X 4 AA tandem repeats of A-A-A-S. Positions Y163–T175 are interaction with host DYNLL1.

Belongs to the asfivirus envelope protein p54 family. Interacts with the host light chain cytoplasmic dynein DYNLL1; this interaction is critical for intracellular microtubule-dependent virus transport toward viral factories.

The protein resides in the virion membrane. It localises to the host cytoplasm. Its subcellular location is the host cytoskeleton. It is found in the host endoplasmic reticulum membrane. Its function is as follows. Inner envelope protein involved, through its interaction with host dynein, in the intracellular microtubule-dependent transport of viral capsid toward viral factories. Seems to induce caspase-3 activation and apoptosis. Plays a role in virion morphogenesis by recruiting and transforming the host ER membranes into the precursors of the viral envelope. Involved in virus attachment to the host cell. This chain is Inner membrane protein p54, found in African swine fever virus (isolate Tick/South Africa/Pretoriuskop Pr4/1996) (ASFV).